The following is a 684-amino-acid chain: Soluble guanylate cyclase gcy-32 (684 aa).

Histidine 105 lines the heme pocket. Residues 396 to 432 (DVEVNLQLEANNEQLETMTRELELERQKTDSILKDML) adopt a coiled-coil conformation. One can recognise a Guanylate cyclase domain in the interval 454 to 582 (TVMFCDLPAF…ETVTLASQME (129 aa)). The Mg(2+) site is built by aspartate 459 and aspartate 503.

The protein belongs to the adenylyl cyclase class-4/guanylyl cyclase family. Heterodimer; with other soluble guanylate cyclases. It depends on heme as a cofactor. As to expression, expressed in a small number of neurons, corresponding to URX, AQR and PQR neurons.

It localises to the cytoplasm. It carries out the reaction GTP = 3',5'-cyclic GMP + diphosphate. May be regulated by molecular oxygen. Probably not activated by nitric oxide (NO). Functionally, synthesizes cyclic GMP (cGMP) from GTP. Influences aerotaxis responses, aggregation and bordering behaviors (gathering around the edge of a bacterial lawn) in combination with other soluble guanylate cyclases. The chain is Soluble guanylate cyclase gcy-32 (gcy-32) from Caenorhabditis elegans.